Here is a 285-residue protein sequence, read N- to C-terminus: 1,4-dihydroxy-2-naphthoyl-CoA synthase (285 aa).

Substrate is bound by residues Arg45, 84-89 (SGGDQK), Tyr97, 129-133 (YSIGG), Thr155, Ser161, Tyr258, and Lys273. 154–156 (QTG) contributes to the hydrogencarbonate binding site.

It belongs to the enoyl-CoA hydratase/isomerase family. MenB subfamily. As to quaternary structure, homohexamer. Dimer of a homotrimer. Hydrogencarbonate is required as a cofactor.

It carries out the reaction 2-succinylbenzoyl-CoA + H(+) = 1,4-dihydroxy-2-naphthoyl-CoA + H2O. Its pathway is quinol/quinone metabolism; 1,4-dihydroxy-2-naphthoate biosynthesis; 1,4-dihydroxy-2-naphthoate from chorismate: step 6/7. The protein operates within quinol/quinone metabolism; menaquinone biosynthesis. Its activity is regulated as follows. Inhibited by sulfite and nitrate. In terms of biological role, converts o-succinylbenzoyl-CoA (OSB-CoA) to 1,4-dihydroxy-2-naphthoyl-CoA (DHNA-CoA). This chain is 1,4-dihydroxy-2-naphthoyl-CoA synthase, found in Escherichia coli (strain K12).